A 269-amino-acid chain; its full sequence is Aminodeoxychorismate lyase (269 aa).

Lys140 bears the N6-(pyridoxal phosphate)lysine mark.

This sequence belongs to the class-IV pyridoxal-phosphate-dependent aminotransferase family. Homodimer. Requires pyridoxal 5'-phosphate as cofactor.

It carries out the reaction 4-amino-4-deoxychorismate = 4-aminobenzoate + pyruvate + H(+). The protein operates within cofactor biosynthesis; tetrahydrofolate biosynthesis; 4-aminobenzoate from chorismate: step 2/2. Involved in the biosynthesis of p-aminobenzoate (PABA), a precursor of tetrahydrofolate. Converts 4-amino-4-deoxychorismate into 4-aminobenzoate (PABA) and pyruvate. The chain is Aminodeoxychorismate lyase (pabC) from Escherichia coli (strain K12).